We begin with the raw amino-acid sequence, 389 residues long: S-adenosylmethionine synthase (389 aa).

H17 lines the ATP pocket. D19 contacts Mg(2+). E45 provides a ligand contact to K(+). L-methionine-binding residues include E58 and Q101. The interval 101–111 is flexible loop; sequence QSPDIAQGVNP. ATP-binding positions include 168 to 170, 234 to 235, D243, 249 to 250, and K270; these read DGK, RF, and RK. D243 is an L-methionine binding site. K274 serves as a coordination point for L-methionine.

The protein belongs to the AdoMet synthase family. Homotetramer; dimer of dimers. Mg(2+) is required as a cofactor. Requires K(+) as cofactor.

It is found in the cytoplasm. It carries out the reaction L-methionine + ATP + H2O = S-adenosyl-L-methionine + phosphate + diphosphate. Its pathway is amino-acid biosynthesis; S-adenosyl-L-methionine biosynthesis; S-adenosyl-L-methionine from L-methionine: step 1/1. Functionally, catalyzes the formation of S-adenosylmethionine (AdoMet) from methionine and ATP. The overall synthetic reaction is composed of two sequential steps, AdoMet formation and the subsequent tripolyphosphate hydrolysis which occurs prior to release of AdoMet from the enzyme. This is S-adenosylmethionine synthase from Syntrophobacter fumaroxidans (strain DSM 10017 / MPOB).